The chain runs to 373 residues: tRNA-specific 2-thiouridylase MnmA (373 aa).

ATP-binding positions include 18–25 and L44; that span reads AMSGGVDS. The active-site Nucleophile is C117. C117 and C214 are oxidised to a cystine. Position 141 (G141) interacts with ATP. An interaction with tRNA region spans residues 163–165; sequence RDQ. C214 (cysteine persulfide intermediate) is an active-site residue.

Belongs to the MnmA/TRMU family.

The protein resides in the cytoplasm. The catalysed reaction is S-sulfanyl-L-cysteinyl-[protein] + uridine(34) in tRNA + AH2 + ATP = 2-thiouridine(34) in tRNA + L-cysteinyl-[protein] + A + AMP + diphosphate + H(+). Catalyzes the 2-thiolation of uridine at the wobble position (U34) of tRNA, leading to the formation of s(2)U34. The chain is tRNA-specific 2-thiouridylase MnmA from Paramagnetospirillum magneticum (strain ATCC 700264 / AMB-1) (Magnetospirillum magneticum).